We begin with the raw amino-acid sequence, 974 residues long: Glycine dehydrogenase (decarboxylating) (974 aa).

Lys-720 is subject to N6-(pyridoxal phosphate)lysine.

It belongs to the GcvP family. The glycine cleavage system is composed of four proteins: P, T, L and H. The cofactor is pyridoxal 5'-phosphate.

It carries out the reaction N(6)-[(R)-lipoyl]-L-lysyl-[glycine-cleavage complex H protein] + glycine + H(+) = N(6)-[(R)-S(8)-aminomethyldihydrolipoyl]-L-lysyl-[glycine-cleavage complex H protein] + CO2. In terms of biological role, the glycine cleavage system catalyzes the degradation of glycine. The P protein binds the alpha-amino group of glycine through its pyridoxal phosphate cofactor; CO(2) is released and the remaining methylamine moiety is then transferred to the lipoamide cofactor of the H protein. The polypeptide is Glycine dehydrogenase (decarboxylating) (Cupriavidus metallidurans (strain ATCC 43123 / DSM 2839 / NBRC 102507 / CH34) (Ralstonia metallidurans)).